The following is a 103-amino-acid chain: Small ribosomal subunit protein uS10c (103 aa).

This sequence belongs to the universal ribosomal protein uS10 family. As to quaternary structure, part of the 30S ribosomal subunit.

Its subcellular location is the plastid. It is found in the chloroplast. Its function is as follows. Involved in the binding of tRNA to the ribosomes. This is Small ribosomal subunit protein uS10c from Trieres chinensis (Marine centric diatom).